Consider the following 402-residue polypeptide: Acetate kinase (402 aa).

Position 7 (Asn7) interacts with Mg(2+). An ATP-binding site is contributed by Lys14. Arg95 lines the substrate pocket. The active-site Proton donor/acceptor is Asp152. ATP-binding positions include 212-216, 286-288, and 334-338; these read HLGNG, DMR, and GIGEN. Glu388 contacts Mg(2+).

The protein belongs to the acetokinase family. In terms of assembly, homodimer. It depends on Mg(2+) as a cofactor. Mn(2+) is required as a cofactor.

The protein localises to the cytoplasm. It carries out the reaction acetate + ATP = acetyl phosphate + ADP. It functions in the pathway metabolic intermediate biosynthesis; acetyl-CoA biosynthesis; acetyl-CoA from acetate: step 1/2. Catalyzes the formation of acetyl phosphate from acetate and ATP. Can also catalyze the reverse reaction. The protein is Acetate kinase of Nitratidesulfovibrio vulgaris (strain ATCC 29579 / DSM 644 / CCUG 34227 / NCIMB 8303 / VKM B-1760 / Hildenborough) (Desulfovibrio vulgaris).